The following is a 211-amino-acid chain: LexA repressor (211 aa).

Residues 35–55 (RAEIANFFGFKSANAAEEHLK) constitute a DNA-binding region (H-T-H motif). Residues S128 and K165 each act as for autocatalytic cleavage activity in the active site.

This sequence belongs to the peptidase S24 family. As to quaternary structure, homodimer.

The enzyme catalyses Hydrolysis of Ala-|-Gly bond in repressor LexA.. Its function is as follows. Represses a number of genes involved in the response to DNA damage (SOS response), including recA and lexA. In the presence of single-stranded DNA, RecA interacts with LexA causing an autocatalytic cleavage which disrupts the DNA-binding part of LexA, leading to derepression of the SOS regulon and eventually DNA repair. The protein is LexA repressor of Colwellia psychrerythraea (strain 34H / ATCC BAA-681) (Vibrio psychroerythus).